The primary structure comprises 106 residues: Small ribosomal subunit protein uS10 (106 aa).

This sequence belongs to the universal ribosomal protein uS10 family. In terms of assembly, part of the 30S ribosomal subunit.

In terms of biological role, involved in the binding of tRNA to the ribosomes. This is Small ribosomal subunit protein uS10 from Pyrobaculum islandicum (strain DSM 4184 / JCM 9189 / GEO3).